Here is a 525-residue protein sequence, read N- to C-terminus: NGFI-A-binding protein 2 (525 aa).

Residues 1-22 (MHRAPSPTAEQPPGGGDSARRT) are disordered. Residue serine 6 is modified to Phosphoserine. Residues 35–113 (ALPRTLGELQ…REWATNPGLF (79 aa)) are NCD1. A disordered region spans residues 135 to 237 (GTRKGSMSNG…GGTGGGPDRL (103 aa)). Phosphoserine occurs at positions 157, 159, 162, and 171. Residues 212-234 (AGGGVPEGTGAGGLAAGGTGGGP) are compositionally biased toward gly residues. The tract at residues 267-356 (LLKLNKKLAR…SRQVARESTY (90 aa)) is NCD2. The segment at 353–384 (ESTYLSSLKGSRLHPEELGGPPLKKLKQEVGE) is necessary for nuclear localization. Residue lysine 379 forms a Glycyl lysine isopeptide (Lys-Gly) (interchain with G-Cter in SUMO1) linkage. The disordered stretch occupies residues 380–416 (QEVGEQSHPEIQQPPPGPESYVPPYRPSLEEDSASLS). Position 479 is a phosphoserine (serine 479). Residues 502 to 525 (PGPHPALVEGRRSSVKVEAEASRQ) are disordered. The span at 510-525 (EGRRSSVKVEAEASRQ) shows a compositional bias: basic and acidic residues. Residue lysine 517 forms a Glycyl lysine isopeptide (Lys-Gly) (interchain with G-Cter in SUMO1); alternate linkage. Lysine 517 participates in a covalent cross-link: Glycyl lysine isopeptide (Lys-Gly) (interchain with G-Cter in SUMO2); alternate.

The protein belongs to the NAB family. Homomultimers may associate with EGR1 bound to DNA. In terms of processing, sumoylation by EGR2 represses EGR2 transcriptional activity in hindbrain. Widely expressed at low levels. Highly expressed in melanoma cell lines.

Its subcellular location is the nucleus. In terms of biological role, acts as a transcriptional repressor for zinc finger transcription factors EGR1 and EGR2. Isoform 2 lacks repression ability. The chain is NGFI-A-binding protein 2 (NAB2) from Homo sapiens (Human).